We begin with the raw amino-acid sequence, 338 residues long: Inositol 2-dehydrogenase (338 aa).

This sequence belongs to the Gfo/Idh/MocA family. As to quaternary structure, homotetramer.

The catalysed reaction is myo-inositol + NAD(+) = scyllo-inosose + NADH + H(+). Functionally, involved in the oxidation of myo-inositol (MI) to 2-keto-myo-inositol (2KMI or 2-inosose). This chain is Inositol 2-dehydrogenase, found in Azotobacter vinelandii (strain DJ / ATCC BAA-1303).